We begin with the raw amino-acid sequence, 382 residues long: Protein delta homolog 2 (382 aa).

An N-terminal signal peptide occupies residues 1–26; that stretch reads MPSGCRCLNLVCLLCILGATSQPARA. EGF-like domains are found at residues 27–58, 62–89, 91–129, and 131–172; these read DDCS…LHCE, RMPG…KFCD, DEHI…RGCE, and KAGP…AHCE. The Extracellular segment spans residues 27 to 305; sequence DDCSSHCDLA…RQESGLGESS (279 aa). 17 disulfides stabilise this stretch: cysteine 29-cysteine 40, cysteine 33-cysteine 46, cysteine 48-cysteine 57, cysteine 66-cysteine 71, cysteine 79-cysteine 88, cysteine 95-cysteine 107, cysteine 101-cysteine 117, cysteine 119-cysteine 128, cysteine 135-cysteine 148, cysteine 142-cysteine 160, cysteine 162-cysteine 171, cysteine 178-cysteine 189, cysteine 183-cysteine 198, cysteine 200-cysteine 209, cysteine 216-cysteine 227, cysteine 221-cysteine 236, and cysteine 238-cysteine 247. A glycan (N-linked (GlcNAc...) asparagine) is linked at asparagine 157. In terms of domain architecture, EGF-like 5; calcium-binding spans 174-210; sequence NVDDCLMRPCANGATCIDGINRFSCLCPEGFAGRFCT. The EGF-like 6; calcium-binding domain maps to 212-248; it reads NLDDCASRPCQRGARCRDRVHDFDCLCPSGYGGKTCE. A helical transmembrane segment spans residues 306 to 326; sequence LVALVVFGSLTAALVLATVLL. Topologically, residues 327 to 382 are cytoplasmic; the sequence is TLRAWRRGICPTGPCCYPAPHYAPARQDQECQVSMLPAGFPLSPDLPPEPGKTTAL.

In terms of tissue distribution, detected in a number of tissues including lung, brain, adrenal gland, testis, adult liver, placenta, ovary and thymus. Not detected in fetal liver or in adult spleen, muscle and heart.

Its subcellular location is the membrane. Regulates adipogenesis. In Mus musculus (Mouse), this protein is Protein delta homolog 2 (Dlk2).